The sequence spans 148 residues: uncharacterized protein (148 aa).

Residues Met-1–Thr-35 form the signal peptide.

Its subcellular location is the secreted. This is an uncharacterized protein from Homo sapiens (Human).